The chain runs to 425 residues: UPF0761 membrane protein XC_3370 (425 aa).

6 consecutive transmembrane segments (helical) span residues 48–68, 105–125, 154–174, 182–202, 216–236, and 250–270; these read VFALVPLAIVVFGVLSAFPAF, FTVAGMVALVASLLITLHSIE, GTMLAAASMAMAAYVFALPLF, LAEFAWRLAPMAVEFVCIVLI, ALPGALLAVILMEIVKWGFGF, and ALSALPILLLWIYLSWVSVLL.

It belongs to the UPF0761 family.

The protein localises to the cell inner membrane. In Xanthomonas campestris pv. campestris (strain 8004), this protein is UPF0761 membrane protein XC_3370.